The primary structure comprises 217 residues: D-methionine transport system permease protein MetI (217 aa).

Topologically, residues 1 to 19 (MSEPMMWLLVRGVWETLAM) are periplasmic. In terms of domain architecture, ABC transmembrane type-1 spans 13–204 (VWETLAMTFV…LLVILVYLIQ (192 aa)). The chain crosses the membrane as a helical span at residues 20–40 (TFVSGFFGFVIGLPVGVLLYV). Residues 41–57 (TRPGQIIANAKLYRTVS) are Cytoplasmic-facing. Residues 58–78 (AIVNIFRSIPFIILLVWMIPF) traverse the membrane as a helical segment. At 79 to 80 (TR) the chain is on the periplasmic side. The chain crosses the membrane as a helical span at residues 81 to 101 (VIVGTSIGLQAAIVPLTVGAA). At 102-151 (PFIARMVENALLEIPTGLIEASRAMGATPMQIVRKVLLPEALPGLVNAAT) the chain is on the cytoplasmic side. The helical transmembrane segment at 152 to 172 (ITLITLVGYSAMGGAVGAGGL) threads the bilayer. Residues 173–185 (GQIGYQYGYIGYN) are Periplasmic-facing. A helical transmembrane segment spans residues 186 to 206 (ATVMNTVLVLLVILVYLIQFA). The Cytoplasmic segment spans residues 207–217 (GDRIVRAVTRK).

It belongs to the binding-protein-dependent transport system permease family. CysTW subfamily.

It is found in the cell inner membrane. Its function is as follows. Part of the binding-protein-dependent transport system for D-methionine and the toxic methionine analog alpha-methyl-methionine. Probably responsible for the translocation of the substrate across the membrane. Functionally, (Microbial infection) Probably transports the toxic C-terminal region of CdiA from E.coli strain MHI813 across the inner membrane to the cytoplasm, where CdiA has a toxic effect. Toxin transport is strain-specific, mutations in this gene do not confer resistance to several other tested CdiA toxins. This is D-methionine transport system permease protein MetI (metI) from Escherichia coli (strain K12).